A 156-amino-acid chain; its full sequence is tRNA (cytidine(34)-2'-O)-methyltransferase (156 aa).

Residues glycine 100, isoleucine 122, and serine 130 each contribute to the S-adenosyl-L-methionine site.

Belongs to the class IV-like SAM-binding methyltransferase superfamily. RNA methyltransferase TrmH family. TrmL subfamily. In terms of assembly, homodimer.

It is found in the cytoplasm. The catalysed reaction is cytidine(34) in tRNA + S-adenosyl-L-methionine = 2'-O-methylcytidine(34) in tRNA + S-adenosyl-L-homocysteine + H(+). The enzyme catalyses 5-carboxymethylaminomethyluridine(34) in tRNA(Leu) + S-adenosyl-L-methionine = 5-carboxymethylaminomethyl-2'-O-methyluridine(34) in tRNA(Leu) + S-adenosyl-L-homocysteine + H(+). Methylates the ribose at the nucleotide 34 wobble position in the two leucyl isoacceptors tRNA(Leu)(CmAA) and tRNA(Leu)(cmnm5UmAA). Catalyzes the methyl transfer from S-adenosyl-L-methionine to the 2'-OH of the wobble nucleotide. The sequence is that of tRNA (cytidine(34)-2'-O)-methyltransferase from Aeromonas hydrophila subsp. hydrophila (strain ATCC 7966 / DSM 30187 / BCRC 13018 / CCUG 14551 / JCM 1027 / KCTC 2358 / NCIMB 9240 / NCTC 8049).